Reading from the N-terminus, the 882-residue chain is Homeobox-leucine zipper protein ROC3 (882 aa).

Residues 104 to 144 are disordered; the sequence is DVDDDHKPQHSGHDQPPDAAQPSGAAGGNAKKKRYHRHTAH. A compositionally biased stretch (basic and acidic residues) spans 107–119; that stretch reads DDHKPQHSGHDQP. Over residues 133-143 the composition is skewed to basic residues; that stretch reads AKKKRYHRHTA. A DNA-binding region (homeobox) is located at residues 134–193; sequence KKKRYHRHTAHQIQQMEALFKECPHPDDKQRLKLSQELGLKPRQVKFWFQNRRTQMKAQQ. Positions 200-263 form a coiled coil; sequence ILRAENENLK…LDRLACIATR (64 aa). The 245-residue stretch at 340 to 584 folds into the START domain; that stretch reads QEQDKQLVVD…LQRQCERLAS (245 aa). The segment covering 782 to 816 has biased composition (low complexity); sequence AAAPTISSSTTTTTGNGNGETSSTPPRNSSSNNNN. Residues 782–820 form a disordered region; the sequence is AAAPTISSSTTTTTGNGNGETSSTPPRNSSSNNNNADEL.

The protein belongs to the HD-ZIP homeobox family. Class IV subfamily.

It is found in the nucleus. Its function is as follows. Probable transcription factor. In Oryza sativa subsp. indica (Rice), this protein is Homeobox-leucine zipper protein ROC3 (ROC3).